We begin with the raw amino-acid sequence, 166 residues long: SsrA-binding protein (166 aa).

This sequence belongs to the SmpB family.

Its subcellular location is the cytoplasm. Required for rescue of stalled ribosomes mediated by trans-translation. Binds to transfer-messenger RNA (tmRNA), required for stable association of tmRNA with ribosomes. tmRNA and SmpB together mimic tRNA shape, replacing the anticodon stem-loop with SmpB. tmRNA is encoded by the ssrA gene; the 2 termini fold to resemble tRNA(Ala) and it encodes a 'tag peptide', a short internal open reading frame. During trans-translation Ala-aminoacylated tmRNA acts like a tRNA, entering the A-site of stalled ribosomes, displacing the stalled mRNA. The ribosome then switches to translate the ORF on the tmRNA; the nascent peptide is terminated with the 'tag peptide' encoded by the tmRNA and targeted for degradation. The ribosome is freed to recommence translation, which seems to be the essential function of trans-translation. This Parasynechococcus marenigrum (strain WH8102) protein is SsrA-binding protein.